Consider the following 215-residue polypeptide: Nucleoredoxin-like protein 1 (215 aa).

The region spanning 1–164 (MVDLFLGKVL…GAELIDRNFM (164 aa)) is the Thioredoxin; atypical domain. The disordered stretch occupies residues 190 to 215 (DEKKKKKKRDDDDDDDDGGGGGGPWG).

The protein belongs to the nucleoredoxin family.

It localises to the cell projection. The protein localises to the cilium. It is found in the photoreceptor outer segment. Functionally, plays an important role in retinal cone photoreceptor survival. May play a role in cone cell viability, slowing down cone degeneration, does not seem to play a role in degenerating rods. This chain is Nucleoredoxin-like protein 1 (nxnl1), found in Danio rerio (Zebrafish).